The primary structure comprises 545 residues: Glucose-6-phosphate isomerase (545 aa).

E351 functions as the Proton donor in the catalytic mechanism. Active-site residues include H382 and K510.

It belongs to the GPI family.

Its subcellular location is the cytoplasm. The enzyme catalyses alpha-D-glucose 6-phosphate = beta-D-fructose 6-phosphate. Its pathway is carbohydrate biosynthesis; gluconeogenesis. It functions in the pathway carbohydrate degradation; glycolysis; D-glyceraldehyde 3-phosphate and glycerone phosphate from D-glucose: step 2/4. Functionally, catalyzes the reversible isomerization of glucose-6-phosphate to fructose-6-phosphate. This Helicobacter acinonychis (strain Sheeba) protein is Glucose-6-phosphate isomerase.